Reading from the N-terminus, the 140-residue chain is MKPAARRKARELAVQAVYSWQMSKNPLDQIELSIVTSNNMQDVDTEYFLELLRAVVRRTAELDAKIKPYLGRLPEELDPVENAILRLATYELVERIDVPYKVVINEAIELAKSFGAEESHKFVNGVLDKAIKTLRKHELS.

Belongs to the NusB family.

Functionally, involved in transcription antitermination. Required for transcription of ribosomal RNA (rRNA) genes. Binds specifically to the boxA antiterminator sequence of the ribosomal RNA (rrn) operons. The sequence is that of Transcription antitermination protein NusB from Pseudoalteromonas atlantica (strain T6c / ATCC BAA-1087).